Here is a 481-residue protein sequence, read N- to C-terminus: Small ribosomal subunit protein bS1 (481 aa).

4 S1 motif domains span residues 36-105, 123-188, 209-277, and 294-363; these read GDIV…LSKK, DEAV…LSRR, GAIR…LSLK, and GQIV…LSLK. Residues 437–465 are disordered; that stretch reads ATEEAGHGSSEQPPASSTPSAKATGGSLA. Polar residues predominate over residues 445–457; that stretch reads SSEQPPASSTPSA.

This sequence belongs to the bacterial ribosomal protein bS1 family.

In terms of biological role, binds mRNA; thus facilitating recognition of the initiation point. It is needed to translate mRNA with a short Shine-Dalgarno (SD) purine-rich sequence. This chain is Small ribosomal subunit protein bS1 (rpsA), found in Mycobacterium leprae (strain TN).